Consider the following 263-residue polypeptide: Indole-3-glycerol phosphate synthase (263 aa).

It belongs to the TrpC family.

The catalysed reaction is 1-(2-carboxyphenylamino)-1-deoxy-D-ribulose 5-phosphate + H(+) = (1S,2R)-1-C-(indol-3-yl)glycerol 3-phosphate + CO2 + H2O. The protein operates within amino-acid biosynthesis; L-tryptophan biosynthesis; L-tryptophan from chorismate: step 4/5. The chain is Indole-3-glycerol phosphate synthase from Sulfurimonas denitrificans (strain ATCC 33889 / DSM 1251) (Thiomicrospira denitrificans (strain ATCC 33889 / DSM 1251)).